The following is a 197-amino-acid chain: Putative AgrB-like protein (197 aa).

The next 4 helical transmembrane spans lie at 29–49 (FGFTIILHYLFTLLLVLAVGL), 79–99 (SIGCTLLSVLFITAISWVPFA), 102–122 (YAWILYGISGGLLIWKYAPYY), and 143–163 (ILIVLFIILAMLMSTQGLVLG).

Belongs to the AgrB family.

The protein resides in the cell membrane. Its function is as follows. May be involved in the proteolytic processing of a quorum sensing system signal molecule precursor. This chain is Putative AgrB-like protein, found in Halalkalibacterium halodurans (strain ATCC BAA-125 / DSM 18197 / FERM 7344 / JCM 9153 / C-125) (Bacillus halodurans).